Here is a 589-residue protein sequence, read N- to C-terminus: Leucine-rich repeat and immunoglobulin-like domain-containing nogo receptor-interacting protein 3 (589 aa).

An N-terminal signal peptide occupies residues 1–23; it reads MTCWLHMLGLHLLLLPTAPLAAG. Residues 24–53 enclose the LRRNT domain; it reads CPARCECSASTRTVACGRRRLTAIPEGIPA. At 24–528 the chain is on the extracellular side; the sequence is CPARCECSAS…LDLTTILVST (505 aa). LRR repeat units lie at residues 54 to 75, 78 to 99, 102 to 123, 126 to 147, 150 to 171, 174 to 195, 206 to 227, 246 to 267, 270 to 291, 294 to 315, and 318 to 339; these read ETRM…DLAS, TLEE…AFAN, RLRV…VFTH, SLTL…SFQD, SLQR…AFAG, GLAE…SLGH, HLAI…SHLE, NLTS…ALRQ, HLTC…SFRD, RLRE…AFVG, and QIRL…TFHS. N-linked (GlcNAc...) asparagine glycosylation is present at Asn184. N-linked (GlcNAc...) asparagine glycans are attached at residues Asn246, Asn256, and Asn275. Residue Asn323 is glycosylated (N-linked (GlcNAc...) asparagine). One can recognise an LRRCT domain in the interval 351–405; sequence NPLACDCRLLWIVQRRKTLNFDGRLPACATPAEVRGDALHNLPDSVLFEYFVCRK. The Ig-like C2-type domain maps to 406–495; that stretch reads PKIRERRLQH…GNDTYFATLT (90 aa). The cysteines at positions 428 and 479 are disulfide-linked. N-linked (GlcNAc...) asparagine glycans are attached at residues Asn487, Asn501, and Asn509. Residues 529-549 traverse the membrane as a helical segment; sequence AMGCITFLGVVLFCFLLLFVW. The Cytoplasmic segment spans residues 550-589; the sequence is SRGRGQHKNNFSVEYSFRKVDGPAAAAGQGGARKFNMKMI.

It is found in the membrane. In Mus musculus (Mouse), this protein is Leucine-rich repeat and immunoglobulin-like domain-containing nogo receptor-interacting protein 3 (Lingo3).